The primary structure comprises 171 residues: Translationally-controlled tumor protein homolog (171 aa).

The region spanning 1 to 171 (MIIYKDIITG…FKDGLEIEKC (171 aa)) is the TCTP domain.

This sequence belongs to the TCTP family.

Its subcellular location is the cytoplasm. Involved in calcium binding and microtubule stabilization. The protein is Translationally-controlled tumor protein homolog (tpt1) of Danio rerio (Zebrafish).